Reading from the N-terminus, the 164-residue chain is Transmembrane protein B169L (164 aa).

Helical transmembrane passes span 28–48 (NPFI…FAIC) and 60–80 (TAIY…YVLN). N-linked (GlcNAc...) asparagine; by host glycosylation is present at Asn-88. The tract at residues 114–142 (SPPSVPDELEEDRPKMIPAGSKPADFKPA) is disordered.

It belongs to the asfivirus B169L family.

Its subcellular location is the host membrane. The protein resides in the virion. This chain is Transmembrane protein B169L, found in Ornithodoros (relapsing fever ticks).